Consider the following 368-residue polypeptide: D-alanine--D-alanine ligase (368 aa).

In terms of domain architecture, ATP-grasp spans 145 to 348 (KRLLQGAGLH…YQDLITTLIE (204 aa)). Residue 175–230 (ADQLGLPLFIKPANQGSSVGVNKATTEAEFTAAIEEAFSYDHKVLIEAAIKGREIE) participates in ATP binding. Mg(2+) contacts are provided by D302, E315, and N317.

It belongs to the D-alanine--D-alanine ligase family. Mg(2+) serves as cofactor. The cofactor is Mn(2+).

It is found in the cytoplasm. It carries out the reaction 2 D-alanine + ATP = D-alanyl-D-alanine + ADP + phosphate + H(+). It functions in the pathway cell wall biogenesis; peptidoglycan biosynthesis. Cell wall formation. This is D-alanine--D-alanine ligase from Shouchella clausii (strain KSM-K16) (Alkalihalobacillus clausii).